The sequence spans 149 residues: FKBP-type 16 kDa peptidyl-prolyl cis-trans isomerase (149 aa).

The 71-residue stretch at 2 to 72 (SESVQSNSAV…FSLEPDAAFG (71 aa)) folds into the PPIase FKBP-type domain.

The protein belongs to the FKBP-type PPIase family.

The catalysed reaction is [protein]-peptidylproline (omega=180) = [protein]-peptidylproline (omega=0). Functionally, PPIases accelerate the folding of proteins. Substrate specificity carried out with 'Suc-Ala-Xaa-Pro-Phe-4-nitroanilide', where Xaa is the amino acid tested, was found to be Phe &gt; Leu &gt;&gt; Ile &gt; Lys = Ala &gt; Trp &gt; His &gt;&gt; Gln. In Escherichia coli O6:H1 (strain CFT073 / ATCC 700928 / UPEC), this protein is FKBP-type 16 kDa peptidyl-prolyl cis-trans isomerase (fkpB).